The chain runs to 625 residues: Protein LEO1 homolog (625 aa).

Disordered regions lie at residues Met1–Leu214 and Glu415–Asp625. Composition is skewed to acidic residues over residues Asp40–Glu55 and Glu63–Ser80. Composition is skewed to basic and acidic residues over residues Ser97–Gly113, Gln121–Glu137, and Glu182–Ile197. Residue Ser203 is modified to Phosphoserine. Residues Glu415–Glu425 are compositionally biased toward basic and acidic residues. The stretch at Glu415–Ser539 forms a coiled coil. Polar residues predominate over residues Ser426 to Ser436. Residues Tyr471–Ile491 show a composition bias toward basic and acidic residues. Residues Leu492–Ile501 are compositionally biased toward basic residues. Over residues Glu523 to Glu537 the composition is skewed to acidic residues. A compositionally biased stretch (basic and acidic residues) spans Lys538–Asp547. Residues Ser548, Ser570, Ser600, Ser605, and Ser622 each carry the phosphoserine modification. The span at Ser548 to Glu561 shows a compositional bias: acidic residues.

Belongs to the LEO1 family. In terms of assembly, component of the nuclear PAF1 complex (PAF1C), which consists of VIP2/ELF7/PAF1, VIP3/SKI8/WDR61, VIP4/LEO1, VIP5/RTF1, VIP6/ELF8/CTR9 and CDC73. Interacts with VIP3 and VIP6. As to expression, expressed in roots, shoot apices, stems, cauline leaves, inflorescence apices and flowers.

The protein localises to the nucleus. In terms of biological role, component of the PAF1 complex (PAF1C) which is involved in histone modifications such as methylation on histone H3 'Lys-4' (H3K4me3). Involved in regulation of flowering time. Required for the expression of the flowering repressor and MADS box gene FLC. Involved in the control of seed dormancy and germination. The protein is Protein LEO1 homolog of Arabidopsis thaliana (Mouse-ear cress).